Consider the following 447-residue polypeptide: Serine/threonine-protein phosphatase 2A 55 kDa regulatory subunit B gamma isoform (447 aa).

WD repeat units lie at residues 22-61 (TEAD…KNAP), 87-128 (EIEE…KRPE), 171-209 (GHTY…RSFN), 220-260 (DLTE…LCDK), 279-317 (EIIS…RPIE), 334-375 (ESDC…DVTL), and 410-446 (DFTK…NSDM).

It belongs to the phosphatase 2A regulatory subunit B family. As to quaternary structure, PP2A consists of a common heterodimeric core enzyme, composed of a 36 kDa catalytic subunit (subunit C) and a 65 kDa constant regulatory subunit (PR65 or subunit A), that associates with a variety of regulatory subunits. Proteins that associate with the core dimer include three families of regulatory subunits B (the R2/B/PR55/B55, R3/B''/PR72/PR130/PR59 and R5/B'/B56 families), the 48 kDa variable regulatory subunit, viral proteins, and cell signaling molecules. Interacts with IER5. As to expression, highly expressed in brain.

Functionally, the B regulatory subunit might modulate substrate selectivity and catalytic activity, and might also direct the localization of the catalytic enzyme to a particular subcellular compartment. This is Serine/threonine-protein phosphatase 2A 55 kDa regulatory subunit B gamma isoform (Ppp2r2c) from Rattus norvegicus (Rat).